The chain runs to 280 residues: Undecaprenyl-diphosphatase (280 aa).

8 helical membrane-spanning segments follow: residues 19–39, 44–64, 89–109, 125–145, 156–176, 197–217, 226–246, and 259–279; these read FLPVSSTGHLFLFSSFFPFSG, FDDLFDIFIQSGAILSVLFLY, FYFLVQIVIGAFPILVVGFIA, ILASAWIFGGVLILIAEWFFQ, VGFRDAILIGIFQCVALIPGV, AEFSFFLAVPVLLAAGIYKLI, VTIPILAFGFLISFLLCTLVI, and GVFGIYRILLGVGVLVFTKFI.

This sequence belongs to the UppP family.

It is found in the cell inner membrane. The catalysed reaction is di-trans,octa-cis-undecaprenyl diphosphate + H2O = di-trans,octa-cis-undecaprenyl phosphate + phosphate + H(+). Functionally, catalyzes the dephosphorylation of undecaprenyl diphosphate (UPP). Confers resistance to bacitracin. This Leptospira borgpetersenii serovar Hardjo-bovis (strain L550) protein is Undecaprenyl-diphosphatase.